Reading from the N-terminus, the 141-residue chain is Myosin regulatory light chain cdc4 (141 aa).

Serine 2 and serine 6 each carry phosphoserine. EF-hand domains lie at 3–38, 74–109, and 109–141; these read TDDS…CGQN, GDPE…LGEK, and KLSN…ILAN. 5 residues coordinate Ca(2+): aspartate 87, aspartate 89, threonine 91, methionine 93, and glutamate 98.

Binds to myosin II chains myo2 and myo3. Interacts with vps27 and a PI 4-kinase pik1. Phosphorylated on either Ser-2 or Ser-6 but not both. Phosphorylation is not essential for the function of the protein.

It is found in the cytoplasm. Functionally, involved in cytokinesis. Required for the formation and function of the contractile ring. In Schizosaccharomyces pombe (strain 972 / ATCC 24843) (Fission yeast), this protein is Myosin regulatory light chain cdc4 (cdc4).